The following is a 222-amino-acid chain: DUF1769 family protein (222 aa).

Belongs to the UPF0590 family.

The protein resides in the cytoplasm. It localises to the nucleus. In Schizosaccharomyces pombe (strain 972 / ATCC 24843) (Fission yeast), this protein is DUF1769 family protein.